The sequence spans 295 residues: NAD kinase (295 aa).

The active-site Proton acceptor is the Asp-72. NAD(+) is bound by residues Asp-72–Gly-73, Asn-146–Asp-147, Arg-157, Lys-174, Asp-176, Thr-187–Ser-192, and Gln-247.

It belongs to the NAD kinase family. It depends on a divalent metal cation as a cofactor.

Its subcellular location is the cytoplasm. It catalyses the reaction NAD(+) + ATP = ADP + NADP(+) + H(+). In terms of biological role, involved in the regulation of the intracellular balance of NAD and NADP, and is a key enzyme in the biosynthesis of NADP. Catalyzes specifically the phosphorylation on 2'-hydroxyl of the adenosine moiety of NAD to yield NADP. In Ectopseudomonas mendocina (strain ymp) (Pseudomonas mendocina), this protein is NAD kinase.